Reading from the N-terminus, the 206-residue chain is dCTP deaminase, dUMP-forming (206 aa).

DCTP is bound by residues 117–122 (RSSFGR), aspartate 135, 143–145 (TLE), glutamine 163, tyrosine 177, lysine 184, and glutamine 188. The Proton donor/acceptor role is filled by glutamate 145.

This sequence belongs to the dCTP deaminase family. As to quaternary structure, homotrimer.

It catalyses the reaction dCTP + 2 H2O = dUMP + NH4(+) + diphosphate. Its pathway is pyrimidine metabolism; dUMP biosynthesis; dUMP from dCTP: step 1/1. In terms of biological role, bifunctional enzyme that catalyzes both the deamination of dCTP to dUTP and the hydrolysis of dUTP to dUMP without releasing the toxic dUTP intermediate. This Methanococcus vannielii (strain ATCC 35089 / DSM 1224 / JCM 13029 / OCM 148 / SB) protein is dCTP deaminase, dUMP-forming.